A 391-amino-acid chain; its full sequence is L-tryptophan--pyruvate aminotransferase 1 (391 aa).

Residues tyrosine 58, 100–101 (ST), asparagine 168, 191–194 (DFAY), 214–217 (TFSK), and arginine 225 contribute to the pyridoxal 5'-phosphate site. An N6-(pyridoxal phosphate)lysine modification is found at lysine 217.

Belongs to the alliinase family. The cofactor is pyridoxal 5'-phosphate. As to expression, expressed at the leaf margin and in the vasculature of emerging young leaves. Expressed in the quiescent center and in the vasculature of root tips. Detected in the shoot apical meristem, stems, sepals, stamen filaments, the shoot and root junction, the stigma and the base of the silique.

The protein localises to the cytoplasm. It catalyses the reaction L-tryptophan + 2-oxoglutarate = indole-3-pyruvate + L-glutamate. The catalysed reaction is L-tryptophan + pyruvate = indole-3-pyruvate + L-alanine. It participates in plant hormone metabolism; auxin biosynthesis. With respect to regulation, inhibited by L-kynurenine. Functionally, L-tryptophan aminotransferase involved in auxin (IAA) biosynthesis. Can convert L-tryptophan and pyruvate to indole-3-pyruvic acid (IPA) and alanine. Catalyzes the first step in IPA branch of the auxin biosynthetic pathway. Required for auxin production to initiate multiple change in growth in response to environmental and developmental cues. It is also active with phenylalanine, tyrosine, leucine, alanine, methionine and glutamine. Both TAA1 and TAR2 are required for maintaining proper auxin levels in roots, while TAA1, TAR1 and TAR2 are required for proper embryo patterning. Involved in the maintenance of the root stem cell niches and required for shade avoidance. In Arabidopsis thaliana (Mouse-ear cress), this protein is L-tryptophan--pyruvate aminotransferase 1 (TAA1).